Reading from the N-terminus, the 348-residue chain is Tetraacyldisaccharide 4'-kinase (348 aa).

50–57 contacts ATP; that stretch reads TMGGTGKT.

Belongs to the LpxK family.

It catalyses the reaction a lipid A disaccharide + ATP = a lipid IVA + ADP + H(+). It participates in glycolipid biosynthesis; lipid IV(A) biosynthesis; lipid IV(A) from (3R)-3-hydroxytetradecanoyl-[acyl-carrier-protein] and UDP-N-acetyl-alpha-D-glucosamine: step 6/6. Transfers the gamma-phosphate of ATP to the 4'-position of a tetraacyldisaccharide 1-phosphate intermediate (termed DS-1-P) to form tetraacyldisaccharide 1,4'-bis-phosphate (lipid IVA). The polypeptide is Tetraacyldisaccharide 4'-kinase (Desulfotalea psychrophila (strain LSv54 / DSM 12343)).